The chain runs to 902 residues: Cysteine-tryptophan domain-containing zinc finger protein 3 (902 aa).

Residues 21–74 (VLIEDNWVCCDMCHKWRLLPYGTNTSMLPKKWICSMLDWLPGMNKCDISEDETT) form a CW-type zinc finger. Zn(2+) is bound by residues Cys30, Cys33, Cys54, and Cys66. 4 disordered regions span residues 131–233 (EHDQ…EDRH), 326–345 (EDNR…NENL), 420–480 (QSST…LNAD), and 537–651 (HGPT…SASP). 2 stretches are compositionally biased toward basic and acidic residues: residues 151-169 (KNRE…DPVS) and 193-203 (SHSDGGDLTEK). Residues 204–213 (SKKHSKSKNR) show a composition bias toward basic residues. Basic and acidic residues-rich tracts occupy residues 214 to 233 (RGID…EDRH) and 335 to 345 (HTSKGGDNENL). The segment covering 421 to 433 (SSTVATSSSSKVS) has biased composition (low complexity). Polar residues-rich tracts occupy residues 450-463 (ESVS…SNTD), 564-588 (NSAP…QIEM), and 599-611 (IDNQ…IGQD). Over residues 612–625 (NHSHMKEGKSEVHT) the composition is skewed to basic and acidic residues. The segment covering 634-648 (KNHTQLRSNVENGDS) has biased composition (polar residues).

In terms of tissue distribution, expressed in leaf sheaths, flag leaves, nodes, internodes and panicles.

It is found in the nucleus. In terms of biological role, binds to histones H3K4me1, H3K4me2 and H3K4me3 in GST pull-down assay. May facilitate the recruitment of effectors to mediate gene expression. In Oryza sativa subsp. japonica (Rice), this protein is Cysteine-tryptophan domain-containing zinc finger protein 3.